Consider the following 506-residue polypeptide: Glutamate--tRNA ligase (506 aa).

The short motif at 21-31 (PSPTGTPHVGM) is the 'HIGH' region element. The 'KMSKS' region signature appears at 265-269 (KLSKR). Position 268 (Lys268) interacts with ATP.

This sequence belongs to the class-I aminoacyl-tRNA synthetase family. Glutamate--tRNA ligase type 1 subfamily. Monomer.

The protein resides in the cytoplasm. The catalysed reaction is tRNA(Glu) + L-glutamate + ATP = L-glutamyl-tRNA(Glu) + AMP + diphosphate. Functionally, catalyzes the attachment of glutamate to tRNA(Glu) in a two-step reaction: glutamate is first activated by ATP to form Glu-AMP and then transferred to the acceptor end of tRNA(Glu). The polypeptide is Glutamate--tRNA ligase (Bifidobacterium longum (strain DJO10A)).